The chain runs to 277 residues: Undecaprenyl-diphosphatase 2 (277 aa).

Helical transmembrane passes span 43 to 63, 87 to 107, 109 to 129, 183 to 203, 214 to 234, and 254 to 274; these read RAMAFNIIIQLGAILAVVWEF, LLIAFFPAVILGVLFADTIHE, LFNPITVAVALVVGGIVMLWA, AATEFSFFLAMPTMVGAAVYS, SDLPVFALGFVVAFIFAMIAV, and IAFGLLILATWQFGWVNWTAA.

It belongs to the UppP family.

The protein localises to the cell inner membrane. The enzyme catalyses di-trans,octa-cis-undecaprenyl diphosphate + H2O = di-trans,octa-cis-undecaprenyl phosphate + phosphate + H(+). Its function is as follows. Catalyzes the dephosphorylation of undecaprenyl diphosphate (UPP). Confers resistance to bacitracin. This Pseudomonas fluorescens (strain Pf0-1) protein is Undecaprenyl-diphosphatase 2.